The following is a 323-amino-acid chain: Syntaxin-42 (323 aa).

Residues 1-302 (MATRNRTTVY…QREGAMVKCA (302 aa)) are Cytoplasmic-facing. Positions 227–289 (QHVSAERERE…EEGYKQLQKA (63 aa)) constitute a t-SNARE coiled-coil homology domain. A helical; Anchor for type IV membrane protein membrane pass occupies residues 303-323 (TILLVLCLIMIVLLILKNILF).

It belongs to the syntaxin family. As to quaternary structure, interacts with VTI12 and SYP61 to form a t-SNARE complex and with VPS45. As to expression, expressed at low levels in roots, stems, flowers and leaves.

It is found in the golgi apparatus. It localises to the trans-Golgi network membrane. Its function is as follows. Contributes to the regulation of secretory and vacuolar transport pathways in the post-Golgi network, and to the maintenance of the Golgi apparatus and trans-Golgi network (TGN) morphologies. Vesicle trafficking protein that functions in the secretory pathway and mediates liposome fusion. Required for extracellular resistance responses to a fungal pathogen. Also involved in the protection of chloroplasts from salicylic acid-dependent biotic stress. This is Syntaxin-42 from Arabidopsis thaliana (Mouse-ear cress).